Reading from the N-terminus, the 310-residue chain is Acetaldehyde dehydrogenase 1 (310 aa).

12–15 (SGNI) contributes to the NAD(+) binding site. The active-site Acyl-thioester intermediate is the cysteine 132. Residues 163 to 171 (SAGPGTRAN) and asparagine 287 contribute to the NAD(+) site.

The protein belongs to the acetaldehyde dehydrogenase family.

The enzyme catalyses acetaldehyde + NAD(+) + CoA = acetyl-CoA + NADH + H(+). This is Acetaldehyde dehydrogenase 1 from Pseudomonas putida (strain W619).